A 355-amino-acid polypeptide reads, in one-letter code: GTPase Obg (355 aa).

The region spanning 1–159 (MKFLDEAKVY…KTIWLRLKLI (159 aa)) is the Obg domain. The 168-residue stretch at 160 to 327 (ADAGLVGLPN…ALRALRDIIV (168 aa)) folds into the OBG-type G domain. Residues 166–173 (GLPNAGKS), 191–195 (FTTLH), 212–215 (DIPG), 279–282 (SQID), and 308–310 (SAA) contribute to the GTP site. 2 residues coordinate Mg(2+): Ser-173 and Thr-193. Residues 333-355 (GDTALPDRSMPHESEVEEEDDRL) form a disordered region.

It belongs to the TRAFAC class OBG-HflX-like GTPase superfamily. OBG GTPase family. In terms of assembly, monomer. Requires Mg(2+) as cofactor.

It localises to the cytoplasm. An essential GTPase which binds GTP, GDP and possibly (p)ppGpp with moderate affinity, with high nucleotide exchange rates and a fairly low GTP hydrolysis rate. Plays a role in control of the cell cycle, stress response, ribosome biogenesis and in those bacteria that undergo differentiation, in morphogenesis control. This chain is GTPase Obg, found in Agrobacterium fabrum (strain C58 / ATCC 33970) (Agrobacterium tumefaciens (strain C58)).